Here is a 327-residue protein sequence, read N- to C-terminus: Movement protein (327 aa).

Residues 297–327 (SASSSNTENELARVSQNIDLLKNKLKEICGE) are a coiled coil.

It belongs to the caulimoviridae movement protein family. In terms of assembly, homotrimer, through the coiled-coil domain. Interacts with VAP. May interact (via N-terminus) with host prenylated Rab acceptor protein 1D (PRA1D).

It localises to the host cell junction. It is found in the host plasmodesma. Its function is as follows. Transports viral genome to neighboring plant cells directly through plasmosdesmata, without any budding. The movement protein allows efficient cell to cell propagation, by bypassing the host cell wall barrier. Acts by forming tubules structures that increase the size exclusion limit (SEL) of plasmodesmata, thereby allowing viral ribonucleocapsids to spread directly to neighboring cells. This is Movement protein from Cauliflower mosaic virus (strain Strasbourg) (CaMV).